The sequence spans 358 residues: Serine/threonine-protein phosphatase 2A activator 2 (358 aa).

As to quaternary structure, interacts with the phosphatase PP2A catalytic subunits PPH21 and PPH22. Forms a ternary complex with PPH21-TAP42.

It is found in the cytoplasm. The enzyme catalyses [protein]-peptidylproline (omega=180) = [protein]-peptidylproline (omega=0). PPIases accelerate the folding of proteins. It catalyzes the cis-trans isomerization of proline imidic peptide bonds in oligopeptides. Acts as a regulatory subunit for TAP42-associated PP2A-like phosphatases modulating their activity or substrate specificity, probably by inducing a conformational change in the catalytic subunit, a direct target of the PPIase. Can reactivate inactive phosphatase PP2A-phosphatase methylesterase complexes (PP2Ai) in presence of ATP and Mg(2+) by dissociating the inactive form from the complex. Acts also inhibitory at high concentrations. Involved in the regulation of cell cycle progression, mitotic spindle formation and bud morphogenesis. The chain is Serine/threonine-protein phosphatase 2A activator 2 (RRD2) from Saccharomyces cerevisiae (strain ATCC 204508 / S288c) (Baker's yeast).